The chain runs to 656 residues: Receptor-type tyrosine-protein phosphatase R (656 aa).

A signal peptide spans 1-23 (MRRAVGFPALCLLLNLHAAGCFS). Ser23 carries O-linked (Xyl...) (chondroitin sulfate) serine glycosylation. Topologically, residues 25-225 (NNDHFLAIRQ…HEADKIWSKE (201 aa)) are extracellular. A glycan (N-linked (GlcNAc...) asparagine) is linked at Asn128. Residues 226–248 (GFYAVVIFLSIFIIIVTCLMIIY) form a helical membrane-spanning segment. The Cytoplasmic segment spans residues 249 to 656 (RLKERLQLSF…ESRLSPETVQ (408 aa)). Residue Ser271 is modified to Phosphoserine. Residue Ser338 is modified to Phosphoserine; by PKA. Residues 392-646 (LQSEFMEIPM…EFVHHALCLF (255 aa)) enclose the Tyrosine-protein phosphatase domain. Substrate is bound by residues Asp553, 587-593 (CSAGIGR), and Gln631. Cys587 serves as the catalytic Phosphocysteine intermediate.

It belongs to the protein-tyrosine phosphatase family. Receptor class 7 subfamily. In terms of assembly, interacts with MAPKs. Widely expressed in the brain, most abundant in cerebellum, midbrain, cerebral cortex and hippocampus. Also expressed in heart and skeletal muscle.

It localises to the cytoplasm. The protein resides in the cell membrane. The enzyme catalyses O-phospho-L-tyrosyl-[protein] + H2O = L-tyrosyl-[protein] + phosphate. Sequesters mitogen-activated protein kinases (MAPKs) such as MAPK1, MAPK3 and MAPK14 in the cytoplasm in an inactive form. The MAPKs bind to a dephosphorylated kinase interacting motif, phosphorylation of which by the protein kinase A complex releases the MAPKs for activation and translocation into the nucleus. In Rattus norvegicus (Rat), this protein is Receptor-type tyrosine-protein phosphatase R (Ptprr).